A 214-amino-acid chain; its full sequence is Large ribosomal subunit protein uL3 (214 aa).

Over residues 132 to 145 (SNRASHGNSVTTRA) the composition is skewed to polar residues. Residues 132–155 (SNRASHGNSVTTRAPGSIGQAQDP) are disordered. An N5-methylglutamine modification is found at glutamine 153.

This sequence belongs to the universal ribosomal protein uL3 family. As to quaternary structure, part of the 50S ribosomal subunit. Forms a cluster with proteins L14 and L19. Methylated by PrmB.

Functionally, one of the primary rRNA binding proteins, it binds directly near the 3'-end of the 23S rRNA, where it nucleates assembly of the 50S subunit. The polypeptide is Large ribosomal subunit protein uL3 (Laribacter hongkongensis (strain HLHK9)).